The primary structure comprises 277 residues: Inhibition of morphological differentiation protein (277 aa).

The Mg(2+) site is built by Asp-18, Asp-20, and Asp-192.

It belongs to the HAD-like hydrolase superfamily. SerB family.

The sequence is that of Inhibition of morphological differentiation protein from Streptomyces azureus.